A 180-amino-acid polypeptide reads, in one-letter code: Large ribosomal subunit protein bL17 (180 aa).

A disordered region spans residues 134–180; it reads AQAKAKKAAAMPTEESEAKPAEEGDVVGASEPDAKAPEEPPTEAPEN.

It belongs to the bacterial ribosomal protein bL17 family. Part of the 50S ribosomal subunit. Contacts protein L32.

The protein is Large ribosomal subunit protein bL17 of Mycobacterium tuberculosis (strain CDC 1551 / Oshkosh).